The chain runs to 222 residues: UPF0758 protein YE0063 (222 aa).

The region spanning 100–222 (VLQNPEITQK…CVSFAERGWL (123 aa)) is the MPN domain. Zn(2+) is bound by residues H171, H173, and D184. A JAMM motif motif is present at residues 171-184 (HNHPSGKAEPSQAD).

It belongs to the UPF0758 family. YicR subfamily.

The polypeptide is UPF0758 protein YE0063 (Yersinia enterocolitica serotype O:8 / biotype 1B (strain NCTC 13174 / 8081)).